Here is a 109-residue protein sequence, read N- to C-terminus: Tyrosine-protein phosphatase 6 (109 aa).

Residues 1 to 109 form the Tyrosine-protein phosphatase domain; the sequence is YNINVIVMVC…SEDETTPLCV (109 aa). Asp76 provides a ligand contact to substrate.

It belongs to the protein-tyrosine phosphatase family.

It carries out the reaction O-phospho-L-tyrosyl-[protein] + H2O = L-tyrosyl-[protein] + phosphate. The polypeptide is Tyrosine-protein phosphatase 6 (STY-6) (Styela plicata (Wrinkled sea squirt)).